A 149-amino-acid polypeptide reads, in one-letter code: NADH-quinone oxidoreductase subunit A (149 aa).

3 helical membrane-spanning segments follow: residues phenylalanine 16 to phenylalanine 36, phenylalanine 68 to tryptophan 88, and leucine 98 to valine 118.

The protein belongs to the complex I subunit 3 family. NDH-1 is composed of 13 different subunits. Subunits NuoA, H, J, K, L, M, N constitute the membrane sector of the complex.

The protein localises to the cell inner membrane. The catalysed reaction is a quinone + NADH + 5 H(+)(in) = a quinol + NAD(+) + 4 H(+)(out). Its function is as follows. NDH-1 shuttles electrons from NADH, via FMN and iron-sulfur (Fe-S) centers, to quinones in the respiratory chain. The immediate electron acceptor for the enzyme in this species is believed to be ubiquinone. Couples the redox reaction to proton translocation (for every two electrons transferred, four hydrogen ions are translocated across the cytoplasmic membrane), and thus conserves the redox energy in a proton gradient. The protein is NADH-quinone oxidoreductase subunit A of Cronobacter sakazakii (strain ATCC BAA-894) (Enterobacter sakazakii).